Here is a 219-residue protein sequence, read N- to C-terminus: UPF0319 protein MS0844 (219 aa).

The N-terminal stretch at 1–21 (MKFRLTALAVAALLTSTASFA) is a signal peptide.

Belongs to the UPF0319 family.

In Mannheimia succiniciproducens (strain KCTC 0769BP / MBEL55E), this protein is UPF0319 protein MS0844.